The chain runs to 890 residues: Exo-beta-D-glucosaminidase (890 aa).

A signal peptide spans 1–18 (MIAKAVAALLLGSGLASA). Residues 19–26 (AGTPLTSK) constitute a propeptide that is removed on maturation. N-linked (GlcNAc...) asparagine glycosylation is found at Asn194, Asn334, and Asn438. The Proton donor role is filled by Asp462. Glu537 functions as the Nucleophile in the catalytic mechanism. 2 N-linked (GlcNAc...) asparagine glycosylation sites follow: Asn576 and Asn687.

Belongs to the glycosyl hydrolase 2 family. As to quaternary structure, monomer.

The protein localises to the secreted. It localises to the extracellular space. The enzyme catalyses Hydrolysis of chitosan or chitosan oligosaccharides to remove successive D-glucosamine residues from the non-reducing termini.. Its function is as follows. Hydrolyzes chitosan and chitooligosaccharides with retention of anomeric configuration. Has no activity against beta-D-galactoside, beta-D-glucuronide, beta-D-mannoside, chitin, glycol chitosan, cellulose, N,N'-diacetylchitibiose and pNP-GlcNAc. In Hypocrea virens (Gliocladium virens), this protein is Exo-beta-D-glucosaminidase.